Here is a 91-residue protein sequence, read N- to C-terminus: Small ribosomal subunit protein uS19 (91 aa).

Belongs to the universal ribosomal protein uS19 family.

Its function is as follows. Protein S19 forms a complex with S13 that binds strongly to the 16S ribosomal RNA. This is Small ribosomal subunit protein uS19 from Pseudomonas fluorescens (strain SBW25).